The sequence spans 435 residues: Xylose isomerase (435 aa).

Active-site residues include H99 and D102. 7 residues coordinate Mg(2+): E230, E266, H269, D294, D305, D307, and D337.

It belongs to the xylose isomerase family. As to quaternary structure, homotetramer. The cofactor is Mg(2+).

It is found in the cytoplasm. It carries out the reaction alpha-D-xylose = alpha-D-xylulofuranose. In Enterococcus faecalis (strain ATCC 700802 / V583), this protein is Xylose isomerase.